The sequence spans 301 residues: Probable alpha-L-glutamate ligase (301 aa).

In terms of domain architecture, ATP-grasp spans 104-287 (LQLLSRKGIG…IAGMIIEYIE (184 aa)). ATP-binding positions include Lys-141, 178–179 (EY), Asp-187, and 211–213 (RSN). Mg(2+)-binding residues include Asp-248, Glu-260, and Asn-262. Mn(2+) is bound by residues Asp-248, Glu-260, and Asn-262.

This sequence belongs to the RimK family. The cofactor is Mg(2+). Requires Mn(2+) as cofactor.

This Methanococcoides burtonii (strain DSM 6242 / NBRC 107633 / OCM 468 / ACE-M) protein is Probable alpha-L-glutamate ligase.